A 247-amino-acid polypeptide reads, in one-letter code: Mitochondrial inner membrane protease ATP23 (247 aa).

The tract at residues 1-21 (MSVPPPPKEDLIKPNPPKSES) is disordered. His-144 lines the a divalent metal cation pocket. Glu-145 is a catalytic residue. His-148 is a binding site for a divalent metal cation.

The protein belongs to the peptidase M76 family.

It localises to the mitochondrion inner membrane. Functionally, has a dual role in the assembly of mitochondrial ATPase. Acts as a protease that removes N-terminal residues of mitochondrial ATPase CF(0) subunit 6 at the intermembrane space side. Also involved in the correct assembly of the membrane-embedded ATPase CF(0) particle, probably mediating association of subunit 6 with the subunit 9 ring. This chain is Mitochondrial inner membrane protease ATP23 (ATP23), found in Kluyveromyces lactis (strain ATCC 8585 / CBS 2359 / DSM 70799 / NBRC 1267 / NRRL Y-1140 / WM37) (Yeast).